Consider the following 880-residue polypeptide: Beta-glucosidase 2 (880 aa).

Positions Met1–Ala17 are cleaved as a signal peptide. Residues Asn24, Asn77, and Asn271 are each glycosylated (N-linked (GlcNAc...) asparagine). Residue Asp299 is part of the active site. Residues Asn336, Asn343, Asn376, Asn548, Asn589, Asn712, Asn743, and Asn794 are each glycosylated (N-linked (GlcNAc...) asparagine).

Belongs to the glycosyl hydrolase 3 family.

The enzyme catalyses Hydrolysis of terminal, non-reducing beta-D-glucosyl residues with release of beta-D-glucose.. The protein operates within glycan metabolism; cellulose degradation. The protein is Beta-glucosidase 2 (BGL2) of Saccharomycopsis fibuligera (Yeast).